We begin with the raw amino-acid sequence, 846 residues long: uncharacterized protein (846 aa).

6 WD repeats span residues 88–129 (TKHI…LLYD), 132–172 (EHSR…STIT), 175–215 (GNSE…LPFL), 219–258 (AHNG…KKSL), 262–309 (NNVS…IPYR), and 313–348 (CHDS…NAFN). A disordered region spans residues 541 to 560 (PREASTPSESSNSSIESEDN). Low complexity predominate over residues 544 to 555 (ASTPSESSNSSI). The WD 7 repeat unit spans residues 624-663 (FHRSSVTSASIKSREAVLSAGNSSRRASIFLDQLSLHGDT).

This is an uncharacterized protein from Schizosaccharomyces pombe (strain 972 / ATCC 24843) (Fission yeast).